Consider the following 227-residue polypeptide: Cytochrome c oxidase subunit 2 (227 aa).

Over 1–14 (MAYPLQLGFQDATS) the chain is Mitochondrial intermembrane. A helical transmembrane segment spans residues 15-45 (PIMEELLHFHDHTLMIVFLISSLVLYIISLM). Topologically, residues 46–59 (LTTKLTHTSTMDAQ) are mitochondrial matrix. The chain crosses the membrane as a helical span at residues 60–87 (EVETIWTILPAIILILIALPSLRILYMM). Topologically, residues 88-227 (DEINNPSLTI…HFEKWSTSML (140 aa)) are mitochondrial intermembrane. Positions 161, 196, 198, 200, 204, and 207 each coordinate Cu cation. A Mg(2+)-binding site is contributed by glutamate 198.

It belongs to the cytochrome c oxidase subunit 2 family. As to quaternary structure, component of the cytochrome c oxidase (complex IV, CIV), a multisubunit enzyme composed of 14 subunits. The complex is composed of a catalytic core of 3 subunits MT-CO1, MT-CO2 and MT-CO3, encoded in the mitochondrial DNA, and 11 supernumerary subunits COX4I, COX5A, COX5B, COX6A, COX6B, COX6C, COX7A, COX7B, COX7C, COX8 and NDUFA4, which are encoded in the nuclear genome. The complex exists as a monomer or a dimer and forms supercomplexes (SCs) in the inner mitochondrial membrane with NADH-ubiquinone oxidoreductase (complex I, CI) and ubiquinol-cytochrome c oxidoreductase (cytochrome b-c1 complex, complex III, CIII), resulting in different assemblies (supercomplex SCI(1)III(2)IV(1) and megacomplex MCI(2)III(2)IV(2)). Found in a complex with TMEM177, COA6, COX18, COX20, SCO1 and SCO2. Interacts with TMEM177 in a COX20-dependent manner. Interacts with COX20. Interacts with COX16. Cu cation serves as cofactor.

The protein localises to the mitochondrion inner membrane. It catalyses the reaction 4 Fe(II)-[cytochrome c] + O2 + 8 H(+)(in) = 4 Fe(III)-[cytochrome c] + 2 H2O + 4 H(+)(out). Component of the cytochrome c oxidase, the last enzyme in the mitochondrial electron transport chain which drives oxidative phosphorylation. The respiratory chain contains 3 multisubunit complexes succinate dehydrogenase (complex II, CII), ubiquinol-cytochrome c oxidoreductase (cytochrome b-c1 complex, complex III, CIII) and cytochrome c oxidase (complex IV, CIV), that cooperate to transfer electrons derived from NADH and succinate to molecular oxygen, creating an electrochemical gradient over the inner membrane that drives transmembrane transport and the ATP synthase. Cytochrome c oxidase is the component of the respiratory chain that catalyzes the reduction of oxygen to water. Electrons originating from reduced cytochrome c in the intermembrane space (IMS) are transferred via the dinuclear copper A center (CU(A)) of subunit 2 and heme A of subunit 1 to the active site in subunit 1, a binuclear center (BNC) formed by heme A3 and copper B (CU(B)). The BNC reduces molecular oxygen to 2 water molecules using 4 electrons from cytochrome c in the IMS and 4 protons from the mitochondrial matrix. The sequence is that of Cytochrome c oxidase subunit 2 (MT-CO2) from Rhinoceros unicornis (Greater Indian rhinoceros).